A 338-amino-acid chain; its full sequence is Ketol-acid reductoisomerase (NADP(+)) (338 aa).

A KARI N-terminal Rossmann domain is found at 1-181 (MKVFYDKDAD…GGGRAGIIET (181 aa)). NADP(+) is bound by residues 24–27 (YGSQ), Arg-47, and Ser-52. His-107 is an active-site residue. Gly-133 is a binding site for NADP(+). Positions 182 to 327 (NFREETETDL…EKLRAMMPWI (146 aa)) constitute a KARI C-terminal knotted domain. Positions 190, 194, 226, and 230 each coordinate Mg(2+). Ser-251 lines the substrate pocket.

It belongs to the ketol-acid reductoisomerase family. The cofactor is Mg(2+).

It catalyses the reaction (2R)-2,3-dihydroxy-3-methylbutanoate + NADP(+) = (2S)-2-acetolactate + NADPH + H(+). It carries out the reaction (2R,3R)-2,3-dihydroxy-3-methylpentanoate + NADP(+) = (S)-2-ethyl-2-hydroxy-3-oxobutanoate + NADPH + H(+). It participates in amino-acid biosynthesis; L-isoleucine biosynthesis; L-isoleucine from 2-oxobutanoate: step 2/4. Its pathway is amino-acid biosynthesis; L-valine biosynthesis; L-valine from pyruvate: step 2/4. Functionally, involved in the biosynthesis of branched-chain amino acids (BCAA). Catalyzes an alkyl-migration followed by a ketol-acid reduction of (S)-2-acetolactate (S2AL) to yield (R)-2,3-dihydroxy-isovalerate. In the isomerase reaction, S2AL is rearranged via a Mg-dependent methyl migration to produce 3-hydroxy-3-methyl-2-ketobutyrate (HMKB). In the reductase reaction, this 2-ketoacid undergoes a metal-dependent reduction by NADPH to yield (R)-2,3-dihydroxy-isovalerate. In Cupriavidus taiwanensis (strain DSM 17343 / BCRC 17206 / CCUG 44338 / CIP 107171 / LMG 19424 / R1) (Ralstonia taiwanensis (strain LMG 19424)), this protein is Ketol-acid reductoisomerase (NADP(+)).